Consider the following 488-residue polypeptide: 3-octaprenyl-4-hydroxybenzoate carboxy-lyase (488 aa).

Asn-172 lines the Mn(2+) pocket. Residues 175–177, 189–191, and 194–195 each bind prenylated FMN; these read IYR, RWL, and RG. Mn(2+) is bound at residue Glu-238. The active-site Proton donor is Asp-287.

It belongs to the UbiD family. In terms of assembly, homohexamer. The cofactor is prenylated FMN. Requires Mn(2+) as cofactor.

The protein resides in the cell membrane. The enzyme catalyses a 4-hydroxy-3-(all-trans-polyprenyl)benzoate + H(+) = a 2-(all-trans-polyprenyl)phenol + CO2. Its pathway is cofactor biosynthesis; ubiquinone biosynthesis. Catalyzes the decarboxylation of 3-octaprenyl-4-hydroxy benzoate to 2-octaprenylphenol, an intermediate step in ubiquinone biosynthesis. The polypeptide is 3-octaprenyl-4-hydroxybenzoate carboxy-lyase (Azotobacter vinelandii (strain DJ / ATCC BAA-1303)).